The chain runs to 362 residues: Heat-inducible transcription repressor HrcA (362 aa).

Belongs to the HrcA family.

Functionally, negative regulator of class I heat shock genes (grpE-dnaK-dnaJ and groELS operons). Prevents heat-shock induction of these operons. The sequence is that of Heat-inducible transcription repressor HrcA from Nitrobacter winogradskyi (strain ATCC 25391 / DSM 10237 / CIP 104748 / NCIMB 11846 / Nb-255).